Reading from the N-terminus, the 335-residue chain is MAVRFLFEALQKAIDEEMEREKRVVLIGEDIGHYGGSYKVTQGLYGKYGKHRVIDTPIAEYSFVGAAVGAAATGLIPVVEGMNMAFILLAYSQISNNMGMLCATSGGHFQVPMVLRGPGGIGKQLGAEHSQRLESYFQSVPGLQIVTCSTPYNAKGLLKSAIRSKNPILFIEHVLLYNLKGEVPDNDYLLPLEKAELVREGSDITVLTYSRQRYNVIQAVKVLVEEGYDPEVIDLISLKPFDMETIGKSIQKTHKVLIVEECMMTGGISNVLQSLIIDNFFDALDAAPLILSSPNVPTPYTGPLEEATVVQTIDIIESIEYGITGKPPKPRTAKK.

E60 serves as a coordination point for thiamine diphosphate. 3 residues coordinate K(+): A161, I162, and N166.

In terms of assembly, heterodimer of an alpha and a beta chain. It depends on thiamine diphosphate as a cofactor.

It is found in the plastid. It localises to the chloroplast. It catalyses the reaction N(6)-[(R)-lipoyl]-L-lysyl-[protein] + pyruvate + H(+) = N(6)-[(R)-S(8)-acetyldihydrolipoyl]-L-lysyl-[protein] + CO2. Functionally, the pyruvate dehydrogenase complex catalyzes the overall conversion of pyruvate to acetyl-CoA and CO(2). It contains multiple copies of three enzymatic components: pyruvate dehydrogenase (E1), dihydrolipoamide acetyltransferase (E2) and lipoamide dehydrogenase (E3). The protein is Pyruvate dehydrogenase E1 component subunit beta (pdhB) of Chlorokybus atmophyticus (Soil alga).